A 326-amino-acid polypeptide reads, in one-letter code: Aquaporin-3 (326 aa).

2 helical membrane passes run 24–44 and 64–84; these read LAEF…IITA and LAFG…GISG. The NPA 1 signature appears at 88–90; sequence NPA. Residues 107–127 traverse the membrane as a helical segment; sequence LVYIFMQYMGAFFAASILYAV. An N-linked (GlcNAc...) asparagine glycan is attached at asparagine 146. Transmembrane regions (helical) follow at residues 166-186 and 196-216; these read IFDA…IIDP and IPLY…YNAG. Positions 220 to 222 match the NPA 2 motif; that stretch reads NPA. A helical membrane pass occupies residues 247 to 267; it reads LWWLVPVIGPHVGGLLGGVTY. An N-linked (GlcNAc...) asparagine glycan is attached at asparagine 294.

Belongs to the MIP/aquaporin (TC 1.A.8) family.

It is found in the cell membrane. Functionally, aquaglyceroporin that may modulate the water content and osmolytes during anhydrobiosis. In Milnesium tardigradum (Water bear), this protein is Aquaporin-3.